We begin with the raw amino-acid sequence, 689 residues long: tRNA 5-methylaminomethyl-2-thiouridine biosynthesis bifunctional protein MnmC (689 aa).

Residues 1 to 245 (MNQRPIQTAT…KREMLTGTLP (245 aa)) form a tRNA (mnm(5)s(2)U34)-methyltransferase region. The interval 270–689 (IGGGIVSALT…RSPATQESSR (420 aa)) is FAD-dependent cmnm(5)s(2)U34 oxidoreductase.

In the N-terminal section; belongs to the methyltransferase superfamily. tRNA (mnm(5)s(2)U34)-methyltransferase family. This sequence in the C-terminal section; belongs to the DAO family. The cofactor is FAD.

It localises to the cytoplasm. It carries out the reaction 5-aminomethyl-2-thiouridine(34) in tRNA + S-adenosyl-L-methionine = 5-methylaminomethyl-2-thiouridine(34) in tRNA + S-adenosyl-L-homocysteine + H(+). Its function is as follows. Catalyzes the last two steps in the biosynthesis of 5-methylaminomethyl-2-thiouridine (mnm(5)s(2)U) at the wobble position (U34) in tRNA. Catalyzes the FAD-dependent demodification of cmnm(5)s(2)U34 to nm(5)s(2)U34, followed by the transfer of a methyl group from S-adenosyl-L-methionine to nm(5)s(2)U34, to form mnm(5)s(2)U34. This Yersinia pestis protein is tRNA 5-methylaminomethyl-2-thiouridine biosynthesis bifunctional protein MnmC.